Here is a 656-residue protein sequence, read N- to C-terminus: Hemocyanin subunit A (656 aa).

A signal peptide spans 1–18 (MWSLALATLFVLGTVIRA). Cu cation contacts are provided by histidine 197, histidine 201, and histidine 227. Residue asparagine 313 is glycosylated (N-linked (GlcNAc...) asparagine). Histidine 348, histidine 352, and histidine 388 together coordinate Cu cation. The cysteines at positions 558 and 606 are disulfide-linked.

This sequence belongs to the tyrosinase family. Hemocyanin subfamily. In terms of assembly, 36-chain polymer consisting of 6 hexamers, each of which includes 4 different chains, A, B, C and D. Hemolymph.

The protein localises to the secreted. It localises to the extracellular space. Hemocyanins are copper-containing oxygen carriers occurring freely dissolved in the hemolymph of many mollusks and arthropods. This Scutigera coleoptrata (House centipede) protein is Hemocyanin subunit A (HCA).